A 73-amino-acid polypeptide reads, in one-letter code: Crustacean hyperglycemic hormone (73 aa).

3 cysteine pairs are disulfide-bonded: cysteine 7–cysteine 43, cysteine 23–cysteine 39, and cysteine 26–cysteine 52. Valine 73 bears the Valine amide mark.

This sequence belongs to the arthropod CHH/MIH/GIH/VIH hormone family. Produced by the medulla terminalis X-organ in the eyestalks and transported to the sinus gland where they are stored and released.

It localises to the secreted. Its function is as follows. Hormone found in the sinus gland of isopods and decapods which controls the blood sugar level. Has a secretagogue action over the amylase released from the midgut gland. May act as a stress hormone and may be involved in the control of molting and reproduction. This Jasus lalandii (Cape rock lobster) protein is Crustacean hyperglycemic hormone.